The primary structure comprises 152 residues: Ribosome maturation factor RimP (152 aa).

It belongs to the RimP family.

The protein localises to the cytoplasm. In terms of biological role, required for maturation of 30S ribosomal subunits. In Idiomarina loihiensis (strain ATCC BAA-735 / DSM 15497 / L2-TR), this protein is Ribosome maturation factor RimP.